The following is a 385-amino-acid chain: Interleukin-13 receptor subunit alpha-2 (385 aa).

The N-terminal stretch at 1–23 (MALMAVNTRCLCLFLLCTITGHS) is a signal peptide. Topologically, residues 24–336 (LEIKVNPPQD…WEGYTGPDSK (313 aa)) are extracellular. 3 consecutive Fibronectin type-III domains span residues 30–130 (PPQD…ADEG), 133–221 (GTKI…PIRS), and 236–334 (PPEF…TGPD). C61 and C109 are disulfide-bonded. The N-linked (GlcNAc...) asparagine glycan is linked to N111. C141 and C151 are joined by a disulfide. Residue N164 is glycosylated (N-linked (GlcNAc...) asparagine). C180 and C193 are oxidised to a cystine. 2 N-linked (GlcNAc...) asparagine glycosylation sites follow: N211 and N295. C265 and C312 are disulfide-bonded. Positions 318-322 (WSEWS) match the WSXWS motif motif. The chain crosses the membrane as a helical span at residues 337–357 (IVFIVPVCLFFIFLLLLLCLI). The Cytoplasmic segment spans residues 358–385 (VEKEDPEPTLSLHVDLNKEMYAYEETLC).

This sequence belongs to the type I cytokine receptor family. Type 5 subfamily. As to quaternary structure, interacts with IL4RA. Interacts with high affinity to interleukin-13 (IL13), but not to interleukin-4 (IL4). Cleaved by MMP8 leading to a soluble form that is also able to interact with IL13.

It localises to the cell membrane. Functionally, cell surface receptor that plays a role in the regulation of IL-13-mediated responses. Functions as a decoy receptor that inhibits IL-13- and IL-4-mediated signal transduction via the JAK-STAT pathway and thereby modulates immune responses and inflammation. Serves as a functional signaling receptor for IL-13 in an alternative pathway involving AP-1 ultimately leading to the production of TGFB1. The protein is Interleukin-13 receptor subunit alpha-2 (Il13ra2) of Rattus norvegicus (Rat).